Reading from the N-terminus, the 496-residue chain is MVLAGLLLLLTLLAGAHLLWGRWKLRNLHLPPLVPGFLHLLQPNLPIHLLSLTQKLGPVYRLRLGLQEVVVLNSKRTIEEAMIRKWVDFAGRPQIPSYKLVSQRCQDISLGDYSLLWKAHKKLTRSALLLGTRSSMEPWVDQLTQEFCERMRVQAGAPVTIQKEFSLLTCSIICYLTFGNKEDTLVHAFHDCVQDLMKTWDHWSIQILDMVPFLRFFPNPGLWRLKQAIENRDHMVEKQLTRHKESMVAGQWRDMTDYMLQGVGRQRVEEGPGQLLEGHVHMSVVDLFIGGTETTASTLSWAVAFLLHHPEIQRRLQEELDRELGPGASCSRVTYKDRARLPLLNATIAEVLRLRPVVPLALPHRTTRPSSIFGYDIPEGMVVIPNLQGAHLDETVWEQPHEFRPDRFLEPGANPSALAFGCGARVCLGESLARLELFVVLLRLLQAFTLLPPPVGALPSLQPDPYCGVNLKVQPFQVRLQPRGVEAGAWESASAQ.

S109 contacts heme b. Residue R232 participates in 17alpha-hydroxyprogesterone binding. R232 provides a ligand contact to progesterone. H364, R425, and C427 together coordinate heme b.

The protein belongs to the cytochrome P450 family. Heme b is required as a cofactor.

Its subcellular location is the endoplasmic reticulum membrane. It localises to the microsome membrane. It catalyses the reaction progesterone + reduced [NADPH--hemoprotein reductase] + O2 = 21-hydroxyprogesterone + oxidized [NADPH--hemoprotein reductase] + H2O + H(+). The catalysed reaction is 17alpha-hydroxyprogesterone + reduced [NADPH--hemoprotein reductase] + O2 = 11-deoxycortisol + oxidized [NADPH--hemoprotein reductase] + H2O + H(+). Functionally, a cytochrome P450 monooxygenase that plays a major role in adrenal steroidogenesis. Catalyzes the hydroxylation at C-21 of progesterone and 17alpha-hydroxyprogesterone to respectively form 11-deoxycorticosterone and 11-deoxycortisol, intermediate metabolites in the biosynthetic pathway of mineralocorticoids and glucocorticoids. Mechanistically, uses molecular oxygen inserting one oxygen atom into a substrate, and reducing the second into a water molecule, with two electrons provided by NADPH via cytochrome P450 reductase (CPR; NADPH-ferrihemoprotein reductase). The chain is Steroid 21-hydroxylase (CYP21) from Bos taurus (Bovine).